Here is a 552-residue protein sequence, read N- to C-terminus: Membrane protein insertase YidC (552 aa).

Residues 3 to 23 form a helical membrane-spanning segment; sequence IKRTVLWVIFFMSAVMLFDNW. Positions 35–59 are disordered; it reads PSATPTKTVGSAAPGTTTPGTQPAD. A compositionally biased stretch (low complexity) spans 42 to 59; it reads TVGSAAPGTTTPGTQPAD. The next 3 helical transmembrane spans lie at 364-384, 430-450, and 504-524; these read WGWSIVLLTLLIKAVFFPLSA, FGGCLPVVIQIPVFISLYWVL, and MMFMPIAFSVMFFFFPAGLVL.

Belongs to the OXA1/ALB3/YidC family. Type 1 subfamily. In terms of assembly, interacts with the Sec translocase complex via SecD. Specifically interacts with transmembrane segments of nascent integral membrane proteins during membrane integration.

The protein localises to the cell inner membrane. Required for the insertion and/or proper folding and/or complex formation of integral membrane proteins into the membrane. Involved in integration of membrane proteins that insert both dependently and independently of the Sec translocase complex, as well as at least some lipoproteins. Aids folding of multispanning membrane proteins. The polypeptide is Membrane protein insertase YidC (Paraburkholderia phytofirmans (strain DSM 17436 / LMG 22146 / PsJN) (Burkholderia phytofirmans)).